A 200-amino-acid chain; its full sequence is Coiled-coil domain-containing protein 28B (200 aa).

Methionine 1 bears the N-acetylmethionine mark. Residues 1 to 10 show a composition bias toward basic residues; the sequence is MEDKKKKRSP. The interval 1–49 is disordered; the sequence is MEDKKKKRSPKPCLTQPAQAPGTLRRVPVPTSHSGSLALGLPHLPSPKQ. A phosphoserine mark is found at serine 46 and serine 115. Over residues 140-152 the composition is skewed to acidic residues; the sequence is GEEEDEEEEEDGV. The tract at residues 140–165 is disordered; sequence GEEEDEEEEEDGVTEGLPEEQKKTMA. The stretch at 158 to 189 forms a coiled coil; that stretch reads EEQKKTMADRNLDQLLSNLEDLSNSIQKLHLA.

In terms of assembly, interacts with BBS1, BBS2, BBS4, BBS5, BBS6, BBS7 and TTC8/BBS8. Interacts with MAPKAP1/SIN1 isoform 1 and RICTOR. In terms of tissue distribution, expressed in the retina, pericardium and limb epithelium.

It localises to the cytoplasm. It is found in the cytoskeleton. The protein localises to the microtubule organizing center. Its subcellular location is the centrosome. Functionally, involved in ciliogenesis. Regulates cilia length through its interaction with MAPKAP1/SIN1 but independently of mTORC2 complex. Modulates mTORC2 complex assembly and function, possibly enhances AKT1 phosphorylation. Does not seem to modulate assembly and function of mTORC1 complex. In Mus musculus (Mouse), this protein is Coiled-coil domain-containing protein 28B (Ccdc28b).